The chain runs to 392 residues: Acetyl-CoA acetyltransferase (392 aa).

Residue Cys85 is the Acyl-thioester intermediate of the active site. The CoA site is built by Cys206, Ser207, Val209, and Lys332. Residue His336 is the Proton acceptor of the active site.

Belongs to the thiolase-like superfamily. Thiolase family. In terms of assembly, interacts with HMG-CoA synthase (HMGCS) that catalyzes the second step in the pathway and with a DUF35 protein. The acetoacetyl-CoA thiolase/HMG-CoA synthase complex channels the intermediate via a fused CoA-binding site, which allows for efficient coupling of the endergonic thiolase reaction with the exergonic HMGCS reaction.

It carries out the reaction 2 acetyl-CoA = acetoacetyl-CoA + CoA. The protein operates within metabolic intermediate biosynthesis; (R)-mevalonate biosynthesis; (R)-mevalonate from acetyl-CoA: step 1/3. Catalyzes the condensation of two acetyl-coA molecules into acetoacetyl-CoA. Functions in the mevalonate (MVA) pathway leading to isopentenyl diphosphate (IPP), a key precursor for the biosynthesis of isoprenoid compounds that are building blocks of archaeal membrane lipids. The polypeptide is Acetyl-CoA acetyltransferase (Methanothermococcus thermolithotrophicus (Methanococcus thermolithotrophicus)).